The chain runs to 81 residues: MKTGIHPEYRPVVFVDTSTDFKFLSGSTKSSSETIKWEDGNEYPLLRVEISSDSHPFYTGKQKHATADGRVDRFNKKYGLK.

It belongs to the bacterial ribosomal protein bL31 family. Type B subfamily. Part of the 50S ribosomal subunit.

This chain is Large ribosomal subunit protein bL31B, found in Listeria innocua serovar 6a (strain ATCC BAA-680 / CLIP 11262).